The chain runs to 405 residues: S-adenosylmethionine synthase (405 aa).

Residue 141–146 (GQGSVD) coordinates ATP.

It belongs to the AdoMet synthase 2 family. Mg(2+) serves as cofactor.

It catalyses the reaction L-methionine + ATP + H2O = S-adenosyl-L-methionine + phosphate + diphosphate. It functions in the pathway amino-acid biosynthesis; S-adenosyl-L-methionine biosynthesis; S-adenosyl-L-methionine from L-methionine: step 1/1. Catalyzes the formation of S-adenosylmethionine from methionine and ATP. The protein is S-adenosylmethionine synthase of Methanococcus maripaludis (strain C5 / ATCC BAA-1333).